A 63-amino-acid chain; its full sequence is Large ribosomal subunit protein eL24 (63 aa).

Zn(2+) contacts are provided by Cys-7, Cys-10, Cys-33, and Cys-37. The C4-type zinc-finger motif lies at 7–37; it reads CSFCGGSIEPGTGLMYVLRNGQILWFCSSKC.

It belongs to the eukaryotic ribosomal protein eL24 family. In terms of assembly, part of the 50S ribosomal subunit. Forms a cluster with proteins L3 and L14. Requires Zn(2+) as cofactor.

In terms of biological role, binds to the 23S rRNA. In Aeropyrum pernix (strain ATCC 700893 / DSM 11879 / JCM 9820 / NBRC 100138 / K1), this protein is Large ribosomal subunit protein eL24.